The sequence spans 771 residues: Probable exo-1,4-beta-xylosidase bxlB (771 aa).

The N-terminal stretch at 1–25 (MVGLTPQHYGNAIALMTYLASTALA) is a signal peptide. Residue N67 is glycosylated (N-linked (GlcNAc...) asparagine). D293 is an active-site residue. N305, N345, N423, N462, and N463 each carry an N-linked (GlcNAc...) asparagine glycan.

It belongs to the glycosyl hydrolase 3 family.

The protein resides in the secreted. It catalyses the reaction Hydrolysis of (1-&gt;4)-beta-D-xylans, to remove successive D-xylose residues from the non-reducing termini.. Its pathway is glycan degradation; xylan degradation. Functionally, xylan 1,4-beta-xylosidase involved in the hydrolysis of xylan, a major structural heterogeneous polysaccharide found in plant biomass representing the second most abundant polysaccharide in the biosphere, after cellulose. The sequence is that of Probable exo-1,4-beta-xylosidase bxlB (bxlB) from Aspergillus clavatus (strain ATCC 1007 / CBS 513.65 / DSM 816 / NCTC 3887 / NRRL 1 / QM 1276 / 107).